The sequence spans 249 residues: uncharacterized protein (249 aa).

Residues 7–64 (PRVHVFLAEKGVGSRRFCEELIRKKLVRVNNTIAKLGDKVTLGDRIIYKKQIFVFKDF) enclose the S4 RNA-binding domain. Catalysis depends on aspartate 112, which acts as the Nucleophile.

The protein belongs to the pseudouridine synthase RsuA family.

The catalysed reaction is a uridine in RNA = a pseudouridine in RNA. This is an uncharacterized protein from Borreliella burgdorferi (strain ATCC 35210 / DSM 4680 / CIP 102532 / B31) (Borrelia burgdorferi).